Consider the following 145-residue polypeptide: Nucleoside diphosphate kinase (145 aa).

Positions 11, 59, 87, 93, 104, and 114 each coordinate ATP. Catalysis depends on histidine 117, which acts as the Pros-phosphohistidine intermediate.

It belongs to the NDK family. As to quaternary structure, homotetramer. It depends on Mg(2+) as a cofactor.

The protein localises to the cytoplasm. It carries out the reaction a 2'-deoxyribonucleoside 5'-diphosphate + ATP = a 2'-deoxyribonucleoside 5'-triphosphate + ADP. It catalyses the reaction a ribonucleoside 5'-diphosphate + ATP = a ribonucleoside 5'-triphosphate + ADP. Its function is as follows. Major role in the synthesis of nucleoside triphosphates other than ATP. The ATP gamma phosphate is transferred to the NDP beta phosphate via a ping-pong mechanism, using a phosphorylated active-site intermediate. This Myxococcus xanthus protein is Nucleoside diphosphate kinase.